Consider the following 1184-residue polypeptide: DNA-directed RNA polymerase subunit beta (1184 aa).

The protein belongs to the RNA polymerase beta chain family. In terms of assembly, the RNAP catalytic core consists of 2 alpha, 1 beta, 1 beta' and 1 omega subunit. When a sigma factor is associated with the core the holoenzyme is formed, which can initiate transcription.

The enzyme catalyses RNA(n) + a ribonucleoside 5'-triphosphate = RNA(n+1) + diphosphate. DNA-dependent RNA polymerase catalyzes the transcription of DNA into RNA using the four ribonucleoside triphosphates as substrates. The polypeptide is DNA-directed RNA polymerase subunit beta (Fusobacterium nucleatum subsp. nucleatum (strain ATCC 25586 / DSM 15643 / BCRC 10681 / CIP 101130 / JCM 8532 / KCTC 2640 / LMG 13131 / VPI 4355)).